We begin with the raw amino-acid sequence, 389 residues long: Probable nitrate transporter NarT (389 aa).

12 consecutive transmembrane segments (helical) span residues 14–34 (TLSL…MPFI), 45–65 (ISII…PFGY), 69–89 (IVGA…PIFF), 97–117 (GMLM…SVGV), 139–159 (GNIG…IIGW), 161–181 (TTVR…FIFG), 211–231 (WYFI…NYLV), 246–266 (GVFI…GDKF), 268–288 (AVKV…ILGI), 294–314 (LFTV…GLIF), 331–351 (IVSM…TYVA), and 353–373 (LTGS…IALF).

This sequence belongs to the major facilitator superfamily. Nitrate/nitrite porter (TC 2.A.1.8) family.

The protein resides in the cell membrane. In terms of biological role, probably required for nitrate uptake under anoxic conditions. Also possibly involved in excretion of nitrite produced by the dissimilatory reduction of nitrate. The polypeptide is Probable nitrate transporter NarT (narT) (Staphylococcus aureus (strain MRSA252)).